The primary structure comprises 299 residues: CCR4-NOT transcription complex subunit 9 (299 aa).

Met-1 is modified (N-acetylmethionine).

It belongs to the CNOT9 family. As to quaternary structure, homodimer. Component of the CCR4-NOT complex; distinct complexes seem to exist that differ in the participation of probably mutually exclusive catalytic subunits. Interacts with MYB, ATF2, RARA, RARB, RARG, RXRA, RXRB and RXRG. Identified in a complex with ATF2 bound to target DNA. Interacts with NANOS2. Directly interacts with ZNF335.

It is found in the nucleus. The protein resides in the cytoplasm. The protein localises to the P-body. Component of the CCR4-NOT complex which is one of the major cellular mRNA deadenylases and is linked to various cellular processes including bulk mRNA degradation, miRNA-mediated repression, translational repression during translational initiation and general transcription regulation. Additional complex functions may be a consequence of its influence on mRNA expression. Involved in down-regulation of MYB- and JUN-dependent transcription. Enhances ligand-dependent transcriptional activity of nuclear hormone receptors. May play a role in cell differentiation. This Bos taurus (Bovine) protein is CCR4-NOT transcription complex subunit 9.